The following is an 858-amino-acid chain: Elongation factor 2 (858 aa).

One can recognise a tr-type G domain in the interval 17 to 362 (ANIRNMSVIA…MITIHLPSPV (346 aa)). Residue 26–33 (AHVDHGKS) coordinates GTP. Phosphothreonine occurs at positions 57 and 59. Residues 158–161 (NKMD) and 216–218 (SGL) each bind GTP. A Diphthamide modification is found at His-715.

Belongs to the TRAFAC class translation factor GTPase superfamily. Classic translation factor GTPase family. EF-G/EF-2 subfamily. In terms of assembly, binds to 80S ribosomes. Actively translating ribosomes show mutually exclusive binding of eIF5a (EIF5A or EIF5A2) and EEF2/eEF2. Interacts with SERBP1; interaction sequesters EEF2/eEF2 at the A-site of the ribosome, thereby blocking the interaction sites of the mRNA-tRNA complex, promoting ribosome stabilization and hibernation. Interacts with HABP4; interaction takes place at the A-site of hibernating ribosomes and promotes ribosome stabilization. Phosphorylation by EF-2 kinase completely inactivates EF-2. Post-translationally, diphthamide is 2-[3-carboxyamido-3-(trimethyl-ammonio)propyl]histidine.

The protein resides in the cytoplasm. It is found in the nucleus. The catalysed reaction is GTP + H2O = GDP + phosphate + H(+). Functionally, catalyzes the GTP-dependent ribosomal translocation step during translation elongation. During this step, the ribosome changes from the pre-translocational (PRE) to the post-translocational (POST) state as the newly formed A-site-bound peptidyl-tRNA and P-site-bound deacylated tRNA move to the P and E sites, respectively. Catalyzes the coordinated movement of the two tRNA molecules, the mRNA and conformational changes in the ribosome. The protein is Elongation factor 2 (EEF2) of Gallus gallus (Chicken).